Here is a 359-residue protein sequence, read N- to C-terminus: 3-dehydroquinate synthase (359 aa).

NAD(+) contacts are provided by residues 71-76, 105-109, 129-130, Lys142, and Lys151; these read DAEAAK, GAVTD, and TT. Residues Glu184, His247, and His263 each contribute to the Zn(2+) site.

Belongs to the sugar phosphate cyclases superfamily. Dehydroquinate synthase family. NAD(+) is required as a cofactor. The cofactor is Co(2+). Zn(2+) serves as cofactor.

The protein resides in the cytoplasm. It catalyses the reaction 7-phospho-2-dehydro-3-deoxy-D-arabino-heptonate = 3-dehydroquinate + phosphate. It functions in the pathway metabolic intermediate biosynthesis; chorismate biosynthesis; chorismate from D-erythrose 4-phosphate and phosphoenolpyruvate: step 2/7. Its function is as follows. Catalyzes the conversion of 3-deoxy-D-arabino-heptulosonate 7-phosphate (DAHP) to dehydroquinate (DHQ). The polypeptide is 3-dehydroquinate synthase (Leifsonia xyli subsp. xyli (strain CTCB07)).